Consider the following 196-residue polypeptide: Probable calcium-binding protein CML32 (196 aa).

3 consecutive EF-hand domains span residues 30–65 (LNAV…LGLV), 121–156 (DEEE…LGLP), and 159–194 (GSLA…ITVW). The Ca(2+) site is built by D43, N45, D47, E49, E54, D134, D136, D138, E145, D172, N174, D176, R178, and E183.

Functionally, potential calcium sensor. The sequence is that of Probable calcium-binding protein CML32 (CML32) from Oryza sativa subsp. japonica (Rice).